We begin with the raw amino-acid sequence, 143 residues long: Hemoglobin subunit alpha (143 aa).

At serine 2 the chain carries N-acetylserine. In terms of domain architecture, Globin spans 2–143; sequence SLSDTDKAVV…LALALSEKYR (142 aa). Residue histidine 60 coordinates O2. Histidine 89 serves as a coordination point for heme b.

It belongs to the globin family. Heterotetramer of two alpha chains and two beta chains. Red blood cells.

In terms of biological role, involved in oxygen transport from gills to the various peripheral tissues. The chain is Hemoglobin subunit alpha (hbaa1) from Danio rerio (Zebrafish).